The following is a 193-amino-acid chain: Iron-sulfur flavoprotein MJ1083 (193 aa).

[4Fe-4S] cluster contacts are provided by Cys47, Cys50, Cys53, and Cys59.

It belongs to the SsuE family. Isf subfamily. As to quaternary structure, homodimer. FMN serves as cofactor. [4Fe-4S] cluster is required as a cofactor.

Redox-active protein probably involved in electron transport. This chain is Iron-sulfur flavoprotein MJ1083, found in Methanocaldococcus jannaschii (strain ATCC 43067 / DSM 2661 / JAL-1 / JCM 10045 / NBRC 100440) (Methanococcus jannaschii).